Here is a 75-residue protein sequence, read N- to C-terminus: Translational regulator CsrA (75 aa).

It belongs to the CsrA/RsmA family. As to quaternary structure, homodimer; the beta-strands of each monomer intercalate to form a hydrophobic core, while the alpha-helices form wings that extend away from the core. Interacts with FliW.

Its subcellular location is the cytoplasm. In terms of biological role, a translational regulator that binds mRNA to regulate translation initiation and/or mRNA stability. Usually binds in the 5'-UTR at or near the Shine-Dalgarno sequence preventing ribosome-binding, thus repressing translation. Its function is probably anatagonized by FliW. Inhibits translation of flaA mRNA in vitro. Involved in post-transcriptional regulation of flagellin biosynthesis. The polypeptide is Translational regulator CsrA (Campylobacter jejuni subsp. jejuni serotype O:6 (strain 81116 / NCTC 11828)).